Here is a 49-residue protein sequence, read N- to C-terminus: uncharacterized protein (49 aa).

A helical transmembrane segment spans residues 6 to 28 (IYPLTVFYFFAIEMSVFCYYNWF).

The protein localises to the membrane. This is an uncharacterized protein from Saccharomyces cerevisiae (strain ATCC 204508 / S288c) (Baker's yeast).